Reading from the N-terminus, the 424-residue chain is Methylthioribose-1-phosphate isomerase (424 aa).

D281 functions as the Proton donor in the catalytic mechanism.

The protein belongs to the eIF-2B alpha/beta/delta subunits family. MtnA subfamily.

The protein localises to the cytoplasm. Its subcellular location is the nucleus. The catalysed reaction is 5-(methylsulfanyl)-alpha-D-ribose 1-phosphate = 5-(methylsulfanyl)-D-ribulose 1-phosphate. It participates in amino-acid biosynthesis; L-methionine biosynthesis via salvage pathway; L-methionine from S-methyl-5-thio-alpha-D-ribose 1-phosphate: step 1/6. Catalyzes the interconversion of methylthioribose-1-phosphate (MTR-1-P) into methylthioribulose-1-phosphate (MTRu-1-P). The sequence is that of Methylthioribose-1-phosphate isomerase from Candida dubliniensis (strain CD36 / ATCC MYA-646 / CBS 7987 / NCPF 3949 / NRRL Y-17841) (Yeast).